An 862-amino-acid polypeptide reads, in one-letter code: Rab GTPase-binding effector protein 1 (862 aa).

An N-acetylalanine modification is found at Ala-2. Residues 11–345 (DVSLQQRVAE…KKADVEEEIK (335 aa)) are a coiled coil. Lys-282 is modified (N6-acetyllysine). The interval 315 to 338 (ELKKKDQEDDEQQRLNKRKDHKKA) is disordered. Phosphoserine occurs at positions 374, 377, and 407. A Phosphothreonine modification is found at Thr-408. Position 410 is a phosphoserine (Ser-410). The tract at residues 435-447 (DESDFGPLVGADS) is interaction with AP1G1, AP1G2, GGA1, GGA2 and GGA3. Positions 534 to 816 (DMCSNYEKQL…LQTELDVSEQ (283 aa)) form a coiled coil.

Belongs to the rabaptin family. As to quaternary structure, homodimer when bound to RAB5A. Heterodimer with RABGEF1. The heterodimer binds RAB4A and RAB5A that have been activated by GTP-binding. Interacts with TSC2. Interacts with GGA1 (via GAE domain), GGA2 (via GAE domain) and GGA3 (via GAE domain). Interacts with AP1G1 (via GAE domain). Interacts with AP1G2 (via GAE domain). Interacts with ECPAS. Interacts with KCNH1. Interacts with PKD1 (via C-terminal domain) and GGA1; the interactions recruit PKD1:PKD2 complex to GGA1 and ARL3 at trans-Golgi network. Proteolytic cleavage by caspases in apoptotic cells causes loss of endosome fusion activity.

The protein localises to the cytoplasm. Its subcellular location is the early endosome. It localises to the recycling endosome. The protein resides in the cytoplasmic vesicle. In terms of biological role, rab effector protein acting as linker between gamma-adaptin, RAB4A and RAB5A. Involved in endocytic membrane fusion and membrane trafficking of recycling endosomes. Involved in KCNH1 channels trafficking to and from the cell membrane. Stimulates RABGEF1 mediated nucleotide exchange on RAB5A. Mediates the traffic of PKD1:PKD2 complex from the endoplasmic reticulum through the Golgi to the cilium. In Homo sapiens (Human), this protein is Rab GTPase-binding effector protein 1 (RABEP1).